Reading from the N-terminus, the 207-residue chain is Small ribosomal subunit protein uS10m (207 aa).

Residues methionine 1–alanine 24 constitute a mitochondrion transit peptide.

The protein belongs to the universal ribosomal protein uS10 family. As to quaternary structure, part of the mitochondrial small ribosomal subunit.

The protein localises to the mitochondrion. In terms of biological role, involved in mitochondrial genome encoded proteins translation. Involved in the binding of tRNA to the ribosomes. The polypeptide is Small ribosomal subunit protein uS10m (RSM10) (Eremothecium gossypii (strain ATCC 10895 / CBS 109.51 / FGSC 9923 / NRRL Y-1056) (Yeast)).